Here is a 197-residue protein sequence, read N- to C-terminus: Probable UbiX-like flavin prenyltransferase (197 aa).

FMN contacts are provided by residues 9 to 11 (GAT), S36, 87 to 90 (SMKT), and R122.

Belongs to the UbiX/PAD1 family. YclB subfamily. Homododecamer.

It catalyses the reaction dimethylallyl phosphate + FMNH2 = prenylated FMNH2 + phosphate. In terms of biological role, flavin prenyltransferase that catalyzes the synthesis of the prenylated FMN cofactor (prenyl-FMN) for phenolic acid decarboxylase C. Involved in the decarboxylation and detoxification of phenolic derivatives under both aerobic and anaerobic conditions. This chain is Probable UbiX-like flavin prenyltransferase (ecdB), found in Escherichia coli.